The primary structure comprises 359 residues: DNA polymerase IV (359 aa).

Positions 4–185 constitute a UmuC domain; sequence IIHIDMDCYF…LSLRKIPGVG (182 aa). Positions 8 and 103 each coordinate Mg(2+). The active site involves glutamate 104.

It belongs to the DNA polymerase type-Y family. As to quaternary structure, monomer. Mg(2+) serves as cofactor.

The protein localises to the cytoplasm. The catalysed reaction is DNA(n) + a 2'-deoxyribonucleoside 5'-triphosphate = DNA(n+1) + diphosphate. Its function is as follows. Poorly processive, error-prone DNA polymerase involved in untargeted mutagenesis. Copies undamaged DNA at stalled replication forks, which arise in vivo from mismatched or misaligned primer ends. These misaligned primers can be extended by PolIV. Exhibits no 3'-5' exonuclease (proofreading) activity. May be involved in translesional synthesis, in conjunction with the beta clamp from PolIII. The polypeptide is DNA polymerase IV (Shewanella sp. (strain MR-7)).